Here is a 450-residue protein sequence, read N- to C-terminus: Gastrin/cholecystokinin type B receptor (450 aa).

Residues 1–57 (MELLKLNSSVQGPGPGSGSSLCHPGVSLLNSSSAGNLSCEPPRIRGTGTRELELAIR) are Extracellular-facing. Residues Asn-7, Asn-30, and Asn-36 are each glycosylated (N-linked (GlcNAc...) asparagine). Residues 58–79 (ITLYAVIFLMSIGGNMLIIVVL) form a helical membrane-spanning segment. Over 80-87 (GLSRRLRT) the chain is Cytoplasmic. The helical transmembrane segment at 88-109 (VTNAFLLSLAVSDLLLAVACMP) threads the bilayer. Over 110 to 131 (FTLLPNLMGTFIFGTVICKAVS) the chain is Extracellular. Cys-127 and Cys-205 are oxidised to a cystine. A helical membrane pass occupies residues 132 to 150 (YLMGVSVSVSTLNLVAIAL). Over 151–170 (ERYSAICRPLQARVWQTRSH) the chain is Cytoplasmic. Residues 171–189 (AARVILATWLLSGLLMVPY) form a helical membrane-spanning segment. The Extracellular portion of the chain corresponds to 190–219 (PVYTVVQPVGPRVLQCMHRWPSARVRQTWS). A helical membrane pass occupies residues 220-242 (VLLLMLLFFIPGVVMAVAYGLIS). At 243–336 (RELYLGLRFD…KLLAKKRVVR (94 aa)) the chain is on the cytoplasmic side. Positions 258–277 (DTQSRVRNQGGLPGGTAPGP) are disordered. The chain crosses the membrane as a helical span at residues 337–358 (MLLVIVLLFFLCWLPIYSANTW). Residues 359–376 (CAFDGPGAHRALSGAPIS) are Extracellular-facing. A helical transmembrane segment spans residues 377–397 (FIHLLSYASACVNPLVYCFMH). Topologically, residues 398-450 (RRFRQACLDTCARCCPRPPRARPRPLPDEDPPTPSIASLSRLSYTTISTLGPG) are cytoplasmic. The S-palmitoyl cysteine moiety is linked to residue Cys-411.

It belongs to the G-protein coupled receptor 1 family. As to expression, stomach and brain.

Its subcellular location is the cell membrane. In terms of biological role, receptor for gastrin and cholecystokinin. The CCK-B receptors occur throughout the central nervous system where they modulate anxiety, analgesia, arousal, and neuroleptic activity. This receptor mediates its action by association with G proteins that activate a phosphatidylinositol-calcium second messenger system. The polypeptide is Gastrin/cholecystokinin type B receptor (CCKBR) (Mastomys natalensis (African soft-furred rat)).